The chain runs to 36 residues: uncharacterized protein (36 aa).

Polar residues predominate over residues 1–14 (MNQLGSGPTKQGVA). The disordered stretch occupies residues 1-36 (MNQLGSGPTKQGVATNTGSTGTTKNNSNLSGKGWVL). The span at 15–36 (TNTGSTGTTKNNSNLSGKGWVL) shows a compositional bias: low complexity.

This is an uncharacterized protein from Dictyostelium discoideum (Social amoeba).